The sequence spans 157 residues: uncharacterized protein (157 aa).

Residues 3–157 enclose the N-acetyltransferase domain; that stretch reads FTLEDMTEEE…TNIRMRKQLC (155 aa).

Belongs to the acetyltransferase family.

This is an uncharacterized protein from Bacillus subtilis (strain 168).